The primary structure comprises 584 residues: Poly(A) RNA polymerase protein 2 (584 aa).

Residues 1 to 11 (MGAKSVTASSS) are compositionally biased toward polar residues. Disordered stretches follow at residues 1–63 (MGAK…LPKD) and 81–147 (EGFD…QELE). Residues 12–35 (KKIKNRHNGKVKKSKKIKKVRKPQ) show a composition bias toward basic residues. Residues 53 to 63 (NEQETNKLPKD) are compositionally biased toward basic and acidic residues. The segment covering 130 to 139 (SEDEQAEQEE) has biased composition (acidic residues). Residues aspartate 236 and aspartate 238 each contribute to the Mg(2+) site. The ATP site is built by glycine 301, lysine 326, asparagine 431, and arginine 435. Positions 371–431 (NLGVLLIEFF…AIQDPGDESN (61 aa)) constitute a PAP-associated domain. The interval 525–584 (TSTATATTTDDDYEITNPPAKKAKIEEKPESEPAKRNSGETYITVSSEDDDEDGYNPYTL) is disordered. Residues 547 to 562 (AKIEEKPESEPAKRNS) are compositionally biased toward basic and acidic residues.

Belongs to the DNA polymerase type-B-like family. Component of the TRAMP complex (also called TRF4 complex) composed of at least HUL4, MTR4, PAP2/TRF4 and either AIR1 or AIR2. Interacts with NOP53 and POL2. Interacts directly with AIR2. Mg(2+) serves as cofactor. Requires Mn(2+) as cofactor.

Its subcellular location is the nucleus. It carries out the reaction RNA(n) + ATP = RNA(n)-3'-adenine ribonucleotide + diphosphate. Functionally, catalytic subunit of the TRAMP complex which has a poly(A) RNA polymerase activity and is involved in a post-transcriptional quality control mechanism limiting inappropriate expression of genetic information. Polyadenylation is required for the degradative activity of the exosome on several of its nuclear RNA substrates like cryptic transcripts generated by RNA polymerase II and III, or hypomethylated pre-tRNAi-Met. Polyadenylates RNA processing and degradation intermediates of snRNAs, snoRNAs and mRNAs that accumulate in strains lacking a functional exosome. TRF4 is also required for proper nuclear division in mitosis, DNA damage repair and sister chromatid cohesion. Involved in the regulation of histone mRNA levels. May mediate mitotic chromosome condensation. This is Poly(A) RNA polymerase protein 2 (PAP2) from Saccharomyces cerevisiae (strain ATCC 204508 / S288c) (Baker's yeast).